The primary structure comprises 106 residues: Small ribosomal subunit protein uS10 (106 aa).

It belongs to the universal ribosomal protein uS10 family. As to quaternary structure, part of the 30S ribosomal subunit.

In terms of biological role, involved in the binding of tRNA to the ribosomes. The protein is Small ribosomal subunit protein uS10 of Solibacter usitatus (strain Ellin6076).